Here is a 369-residue protein sequence, read N- to C-terminus: Choline-phosphate cytidylyltransferase B (369 aa).

The interval 1-27 (MPVVTTDAESETGIPKSLSNEPPSETM) is disordered. CTP-binding residues include Ile84, Phe85, His92, and Lys122. Phosphocholine is bound by residues Lys122 and Trp151. The CTP site is built by His168, Asp169, Tyr173, Gln195, Arg196, Thr197, and Ile200. A disordered region spans residues 309–369 (RMLQALSPKQ…SMSEGDEDEK (61 aa)). Phosphoserine is present on residues Ser315, Ser319, Ser322, Ser323, Ser329, Ser331, and Ser335. Residues 319-339 (SPVSSPTRSRSPSRSPSPTFS) show a composition bias toward low complexity. The residue at position 345 (Thr345) is a Phosphothreonine. A phosphoserine mark is found at Ser346, Ser349, Ser350, Ser355, Ser360, and Ser362. A compositionally biased stretch (low complexity) spans 351 to 362 (PKAASASISSMS).

It belongs to the cytidylyltransferase family. Homodimer. Post-translationally, phosphorylated. Extensively phosphorylated. As to expression, highly expressed in testis, placenta, brain, ovary, liver and fetal lung. In terms of tissue distribution, expressed in brain, liver and fetal lung.

It is found in the cytoplasm. It localises to the endoplasmic reticulum. The catalysed reaction is phosphocholine + CTP + H(+) = CDP-choline + diphosphate. Its pathway is phospholipid metabolism; phosphatidylcholine biosynthesis; phosphatidylcholine from phosphocholine: step 1/2. Functionally, catalyzes the key rate-limiting step in the CDP-choline pathway for phosphatidylcholine biosynthesis. The protein is Choline-phosphate cytidylyltransferase B (PCYT1B) of Homo sapiens (Human).